Reading from the N-terminus, the 477-residue chain is Glycogen synthase (477 aa).

Lys-15 is a binding site for ADP-alpha-D-glucose.

This sequence belongs to the glycosyltransferase 1 family. Bacterial/plant glycogen synthase subfamily.

It carries out the reaction [(1-&gt;4)-alpha-D-glucosyl](n) + ADP-alpha-D-glucose = [(1-&gt;4)-alpha-D-glucosyl](n+1) + ADP + H(+). It functions in the pathway glycan biosynthesis; glycogen biosynthesis. Synthesizes alpha-1,4-glucan chains using ADP-glucose. This Erwinia tasmaniensis (strain DSM 17950 / CFBP 7177 / CIP 109463 / NCPPB 4357 / Et1/99) protein is Glycogen synthase.